A 489-amino-acid polypeptide reads, in one-letter code: UDP-N-acetylmuramoyl-L-alanyl-D-glutamate--2,6-diaminopimelate ligase (489 aa).

Ser-30 contributes to the UDP-N-acetyl-alpha-D-muramoyl-L-alanyl-D-glutamate binding site. 108–114 (GTNGKTT) contacts ATP. Residues Asn-149, 150–151 (TT), Ser-177, Gln-183, and Arg-185 each bind UDP-N-acetyl-alpha-D-muramoyl-L-alanyl-D-glutamate. Lys-217 carries the N6-carboxylysine modification. Meso-2,6-diaminopimelate is bound by residues Arg-383, 407–410 (DNPR), Gly-459, and Glu-463. A Meso-diaminopimelate recognition motif motif is present at residues 407-410 (DNPR).

Belongs to the MurCDEF family. MurE subfamily. Requires Mg(2+) as cofactor. Carboxylation is probably crucial for Mg(2+) binding and, consequently, for the gamma-phosphate positioning of ATP.

The protein resides in the cytoplasm. The catalysed reaction is UDP-N-acetyl-alpha-D-muramoyl-L-alanyl-D-glutamate + meso-2,6-diaminopimelate + ATP = UDP-N-acetyl-alpha-D-muramoyl-L-alanyl-gamma-D-glutamyl-meso-2,6-diaminopimelate + ADP + phosphate + H(+). Its pathway is cell wall biogenesis; peptidoglycan biosynthesis. Its function is as follows. Catalyzes the addition of meso-diaminopimelic acid to the nucleotide precursor UDP-N-acetylmuramoyl-L-alanyl-D-glutamate (UMAG) in the biosynthesis of bacterial cell-wall peptidoglycan. The protein is UDP-N-acetylmuramoyl-L-alanyl-D-glutamate--2,6-diaminopimelate ligase of Geobacillus kaustophilus (strain HTA426).